Reading from the N-terminus, the 309-residue chain is Pantothenate kinase (309 aa).

Residue 92-99 (GSVAVGKT) participates in ATP binding.

It belongs to the prokaryotic pantothenate kinase family.

Its subcellular location is the cytoplasm. It catalyses the reaction (R)-pantothenate + ATP = (R)-4'-phosphopantothenate + ADP + H(+). The protein operates within cofactor biosynthesis; coenzyme A biosynthesis; CoA from (R)-pantothenate: step 1/5. This is Pantothenate kinase (coaA) from Lactiplantibacillus plantarum (strain ATCC BAA-793 / NCIMB 8826 / WCFS1) (Lactobacillus plantarum).